Here is a 515-residue protein sequence, read N- to C-terminus: Maturase K (515 aa).

This sequence belongs to the intron maturase 2 family. MatK subfamily.

Its subcellular location is the plastid. It is found in the chloroplast. Usually encoded in the trnK tRNA gene intron. Probably assists in splicing its own and other chloroplast group II introns. This chain is Maturase K, found in Pinus pinea (Italian stone pine).